The chain runs to 1529 residues: ABC multidrug transporter AFR2 (1529 aa).

Positions 1 to 10 (MAFAGVGQGL) are enriched in gly residues. Residues 1 to 21 (MAFAGVGQGLGTYDRTEQTSG) form a disordered region. The ABC transporter 1 domain maps to 144-394 (GALRDLISNR…FVDMGFHCPS (251 aa)). 2 N-linked (GlcNAc...) asparagine glycosylation sites follow: N235 and N318. 5 consecutive transmembrane segments (helical) span residues 505-525 (LTLTQLFGNFIMALIIGSVFY), 539-559 (ALLFFAILMSAFGSALEILIL), 589-609 (IPYKVINCIIFSLTLYFMTNL), 614-634 (GPYFFFMLISFTLTMVMSMLF), and 648-668 (LAPAALLILGLVMYTGFAVNV). A glycan (N-linked (GlcNAc...) asparagine) is linked at N742. A helical transmembrane segment spans residues 757–777 (GILIGFFLFFTAIYMTATEFI). Positions 845–1087 (FSWKDVVYDI…ILIDYFEKNG (243 aa)) constitute an ABC transporter 2 domain. An ATP-binding site is contributed by 881–888 (GVSGAGKT). 5 helical membrane-spanning segments follow: residues 1193 to 1213 (YIWSKAALCALSALFIGFSFF), 1227 to 1247 (FSVFMMFTIFGQLTQQIMPNF), 1268 to 1288 (IFILSNIVAEIPWAILMGAVI), 1314 to 1334 (LMFLYIEMFLIFNATFAIMIV), and 1353 to 1373 (MCLIFCGVLAPPSSLPGFWMF). N1434 carries N-linked (GlcNAc...) asparagine glycosylation. The chain crosses the membrane as a helical span at residues 1465–1485 (FGLLWAYVVFNIIAAVGIYWL). Residues 1493-1529 (GKEQASEPEGVQEKLVPAQSSEKKRESVSRGSESTAA) are disordered.

It belongs to the ABC transporter superfamily. ABCG family. PDR (TC 3.A.1.205) subfamily.

It is found in the cell membrane. It catalyses the reaction itraconazole(in) + ATP + H2O = itraconazole(out) + ADP + phosphate + H(+). The enzyme catalyses voriconazole(in) + ATP + H2O = voriconazole(out) + ADP + phosphate + H(+). The catalysed reaction is fluconazole(in) + ATP + H2O = fluconazole(out) + ADP + phosphate + H(+). In terms of biological role, pleiotropic ABC efflux transporter that confers resistance to structurally and functionally unrelated compounds including azoles such as fluconazole (FLC), itraconazole (ITC), posaconazole (POS), and voriconazole (VRC). The sequence is that of ABC multidrug transporter AFR2 from Cryptococcus neoformans var. grubii serotype A (strain H99 / ATCC 208821 / CBS 10515 / FGSC 9487) (Filobasidiella neoformans var. grubii).